The following is a 498-amino-acid chain: RuvB-like helicase 2 (498 aa).

Position 79–86 (79–86 (GPPSTGKT)) interacts with ATP. Positions 458 to 498 (VTIGQESTDGSTQPQAKQQEVAQPEATQPQSQPEDDKMETD) are disordered. A compositionally biased stretch (polar residues) spans 461-489 (GQESTDGSTQPQAKQQEVAQPEATQPQSQ).

The protein belongs to the RuvB family. In terms of assembly, may form heterododecamers with RVB1. Component of the SWR1 chromatin remodeling complex, the INO80 chromatin remodeling complex, and of the R2TP complex.

The protein localises to the nucleus. It catalyses the reaction ATP + H2O = ADP + phosphate + H(+). In terms of biological role, DNA helicase which participates in several chromatin remodeling complexes, including the SWR1 and the INO80 complexes. The SWR1 complex mediates the ATP-dependent exchange of histone H2A for the H2A variant HZT1 leading to transcriptional regulation of selected genes by chromatin remodeling. The INO80 complex remodels chromatin by shifting nucleosomes and is involved in DNA repair. Also involved in pre-rRNA processing. In Candida albicans (strain SC5314 / ATCC MYA-2876) (Yeast), this protein is RuvB-like helicase 2 (RVB2).